The sequence spans 350 residues: Anthranilate phosphoribosyltransferase (350 aa).

5-phospho-alpha-D-ribose 1-diphosphate contacts are provided by residues G94, 97–98 (GD), T102, 104–107 (NVST), 122–130 (KHGNRSVSS), and S134. Anthranilate is bound at residue G94. S106 is a Mg(2+) binding site. Anthranilate is bound at residue N125. R180 provides a ligand contact to anthranilate. Mg(2+)-binding residues include D239 and E240.

Belongs to the anthranilate phosphoribosyltransferase family. In terms of assembly, homodimer. Requires Mg(2+) as cofactor.

It catalyses the reaction N-(5-phospho-beta-D-ribosyl)anthranilate + diphosphate = 5-phospho-alpha-D-ribose 1-diphosphate + anthranilate. It participates in amino-acid biosynthesis; L-tryptophan biosynthesis; L-tryptophan from chorismate: step 2/5. Functionally, catalyzes the transfer of the phosphoribosyl group of 5-phosphorylribose-1-pyrophosphate (PRPP) to anthranilate to yield N-(5'-phosphoribosyl)-anthranilate (PRA). This is Anthranilate phosphoribosyltransferase from Pelobacter propionicus (strain DSM 2379 / NBRC 103807 / OttBd1).